Here is a 120-residue protein sequence, read N- to C-terminus: Transmembrane protein 010R (120 aa).

2 helical membrane passes run 40 to 60 (FCGA…ATAT) and 72 to 92 (SIFF…VWFL).

It belongs to the IIV-6 010R family.

It localises to the membrane. The protein is Transmembrane protein 010R of Invertebrate iridescent virus 6 (IIV-6).